The following is a 210-amino-acid chain: 3-phospho-D-glycerate guanylyltransferase (210 aa).

Belongs to the CofC family.

It catalyses the reaction (2R)-3-phosphoglycerate + GTP + H(+) = 3-[(R)-glyceryl]-diphospho-5'-guanosine + diphosphate. The protein operates within cofactor biosynthesis; coenzyme F420 biosynthesis. In terms of biological role, guanylyltransferase that catalyzes the activation of (2R)-3-phosphoglycerate (3PG) as 3-[(R)-glyceryl]-diphospho-5'-guanosine, via the condensation of 3PG with GTP. It is involved in the biosynthesis of a derivative of the hydride carrier cofactor coenzyme F420, 3PG-F420. The chain is 3-phospho-D-glycerate guanylyltransferase from Colwellia psychrerythraea (strain 34H / ATCC BAA-681) (Vibrio psychroerythus).